The primary structure comprises 476 residues: RNA-binding protein 45 (476 aa).

The segment covering 1–14 (MDDAGGLGGSGGFR) has biased composition (gly residues). Residues 1–20 (MDDAGGLGGSGGFRPGVDSL) are disordered. RRM domains lie at 26–106 (SRIF…IAQS) and 121–192 (TRIF…LAEP). Residue Lys34 forms a Glycyl lysine isopeptide (Lys-Gly) (interchain with G-Cter in SUMO2) linkage. The disordered stretch occupies residues 192–212 (PKNKVSGSPEQDDYSSGRQEA). Positions 196–209 (VSGSPEQDDYSSGR) are enriched in polar residues. Ser199 and Ser464 each carry phosphoserine. An RRM 3 domain is found at 392-464 (ERLFVVFNPH…VRLKVMLADS (73 aa)).

It is found in the cytoplasm. The protein localises to the nucleus. In terms of biological role, RNA-binding protein with binding specificity for poly(C). May play an important role in neural development. The protein is RNA-binding protein 45 (Rbm45) of Mus musculus (Mouse).